Consider the following 210-residue polypeptide: Ribonuclease HII (210 aa).

The RNase H type-2 domain occupies 2–203 (SGVMGIDEAG…YKRVESEVKQ (202 aa)). A divalent metal cation contacts are provided by Asp-8, Glu-9, and Asp-99.

Belongs to the RNase HII family. It depends on Mn(2+) as a cofactor. Mg(2+) serves as cofactor.

The protein resides in the cytoplasm. It carries out the reaction Endonucleolytic cleavage to 5'-phosphomonoester.. Its function is as follows. Endonuclease that specifically degrades the RNA of RNA-DNA hybrids. The chain is Ribonuclease HII from Methanopyrus kandleri (strain AV19 / DSM 6324 / JCM 9639 / NBRC 100938).